Here is a 106-residue protein sequence, read N- to C-terminus: uncharacterized protein (106 aa).

The signal sequence occupies residues 1–31; the sequence is MKKKTKIILSLLAALIVILIVLPVLSPVVFT.

This is an uncharacterized protein from Bacillus subtilis (strain 168).